Reading from the N-terminus, the 518-residue chain is Glutamate--cysteine ligase (518 aa).

Belongs to the glutamate--cysteine ligase type 1 family. Type 1 subfamily.

The enzyme catalyses L-cysteine + L-glutamate + ATP = gamma-L-glutamyl-L-cysteine + ADP + phosphate + H(+). The protein operates within sulfur metabolism; glutathione biosynthesis; glutathione from L-cysteine and L-glutamate: step 1/2. The chain is Glutamate--cysteine ligase from Shigella dysenteriae serotype 1 (strain Sd197).